The sequence spans 262 residues: Ribose-5-phosphate isomerase A (262 aa).

Substrate is bound by residues 33 to 36 (TGST), 89 to 92 (DGAD), and 102 to 105 (KGGG). Glu111 functions as the Proton acceptor in the catalytic mechanism. Lys129 is a substrate binding site.

It belongs to the ribose 5-phosphate isomerase family. As to quaternary structure, homodimer.

The catalysed reaction is aldehydo-D-ribose 5-phosphate = D-ribulose 5-phosphate. It functions in the pathway carbohydrate degradation; pentose phosphate pathway; D-ribose 5-phosphate from D-ribulose 5-phosphate (non-oxidative stage): step 1/1. Its function is as follows. Catalyzes the reversible conversion of ribose-5-phosphate to ribulose 5-phosphate. This chain is Ribose-5-phosphate isomerase A, found in Ruegeria sp. (strain TM1040) (Silicibacter sp.).